The sequence spans 2302 residues: Phosphatidylinositol phosphatase PTPRQ (2302 aa).

A signal peptide spans 1–18; sequence MMDFHFSFLFLLIGTSES. The Extracellular portion of the chain corresponds to 19–1908; sequence QVDVSSSFDG…GEGLSERTVE (1890 aa). Asn-54 is a glycosylation site (N-linked (GlcNAc...) asparagine). Fibronectin type-III domains follow at residues 60–155, 159–254, 310–398, 401–501, 474–566, 570–665, 670–759, 764–854, 859–948, 953–1053, 1058–1151, 1156–1243, 1248–1341, 1345–1431, 1435–1539, 1544–1642, and 1647–1748; these read PPVF…TAES, KVVN…SSST, PPQN…PPDV, AVFD…PHND, GFYE…TVRT, VPSS…TPED, SPQD…TSET, APEN…TEED, PPQN…TPEG, PPND…TDQD, PVGN…TEED, PPII…TDES, PPQN…TQES, AVRN…LPET, APTN…TLPG, PPEN…TLES, and PPNN…IKAP. Residues Asn-162, Asn-169, Asn-318, Asn-354, and Asn-389 are each glycosylated (N-linked (GlcNAc...) asparagine). Residues Asn-733 and Asn-746 are each glycosylated (N-linked (GlcNAc...) asparagine). 4 N-linked (GlcNAc...) asparagine glycosylation sites follow: Asn-904, Asn-998, Asn-1010, and Asn-1040. N-linked (GlcNAc...) asparagine glycans are attached at residues Asn-1251 and Asn-1256. Residue Asn-1805 is glycosylated (N-linked (GlcNAc...) asparagine). A helical membrane pass occupies residues 1909 to 1929; sequence IILSVTLCILSIILLGTAIFA. Residues 1930-2302 are Cytoplasmic-facing; the sequence is FVRIRQKQKE…VELEWEETTM (373 aa). In terms of domain architecture, Tyrosine-protein phosphatase spans 2006-2262; the sequence is FQEEFSELPK…IFLHQCILDL (257 aa). Cys-2203 serves as the catalytic Phosphocysteine intermediate.

The protein belongs to the protein-tyrosine phosphatase family. Receptor class 2A subfamily. As to quaternary structure, interacts with TPRN. TPRN, CLIC5 and PTPQR form concentric rings at the base of stereocilia and may form a complex.

The protein resides in the cell projection. It localises to the stereocilium. Its subcellular location is the apical cell membrane. It is found in the basal cell membrane. The enzyme catalyses a 1,2-diacyl-sn-glycero-3-phospho-(1D-myo-inositol-3,4,5-trisphosphate) + H2O = a 1,2-diacyl-sn-glycero-3-phospho-(1D-myo-inositol-4,5-bisphosphate) + phosphate. It carries out the reaction a 1,2-diacyl-sn-glycero-3-phospho-(1D-myo-inositol-3,4,5-trisphosphate) + H2O = a 1,2-diacyl-sn-glycero-3-phospho-(1D-myo-inositol-3,4-bisphosphate) + phosphate. It catalyses the reaction a 1,2-diacyl-sn-glycero-3-phospho-(1D-myo-inositol-3,5-bisphosphate) + H2O = a 1,2-diacyl-sn-glycero-3-phospho-(1D-myo-inositol-5-phosphate) + phosphate. The catalysed reaction is a 1,2-diacyl-sn-glycero-3-phospho-(1D-myo-inositol-3,5-bisphosphate) + H2O = a 1,2-diacyl-sn-glycero-3-phospho-(1D-myo-inositol-3-phosphate) + phosphate. The enzyme catalyses a 1,2-diacyl-sn-glycero-3-phospho-(1D-myo-inositol-4,5-bisphosphate) + H2O = a 1,2-diacyl-sn-glycero-3-phospho-(1D-myo-inositol 4-phosphate) + phosphate. Its function is as follows. Dephosphorylates phosphatidylinositol phosphates, such as phosphatidylinositol 3,4,5-trisphosphate (PIP3) and phosphatidylinositol 3,5-diphosphates, with preference for PIP3. Phosphate can be hydrolyzed from the D3 and D5 positions in the inositol ring. Has low tyrosine-protein phosphatase activity in vitro; however, the relevance of such activity in vivo is unclear. Plays an important role in adipogenesis of mesenchymal stem cells (MSCs). Regulates the phosphorylation state of AKT1 by regulating the levels of PIP3 level in MSCs and preadipocyte cells. Required for hair bundle maturation, a process that enables hair cells to detect and transmit sound and balance signals effectively, therefore affecting auditory function. May act by regulating the level of phosphatidylinositol 4,5-bisphosphate (PIP2) level in the basal region of hair bundles. The protein is Phosphatidylinositol phosphatase PTPRQ (Ptprq) of Rattus norvegicus (Rat).